The sequence spans 392 residues: Speckle-type POZ protein-like A (392 aa).

Residues 31–161 (KFSYMWTINN…DDKLTLFCEV (131 aa)) enclose the MATH domain. The BTB domain occupies 200–267 (TDCSLYVGGQ…IYTGKAPNLE (68 aa)).

The protein belongs to the Tdpoz family. In terms of assembly, homodimer. Heterodimer with SPOP. Component of cullin-RING-based BCR (BTB-CUL3-RBX1) E3 ubiquitin-protein ligase complexes containing homodimeric SPOPL or the heterodimer formed by SPOP and SPOPL.

It localises to the nucleus. It functions in the pathway protein modification; protein ubiquitination. Functionally, component of a cullin-RING-based BCR (BTB-CUL3-RBX1) E3 ubiquitin-protein ligase complex that mediates the ubiquitination and subsequent proteasomal degradation of target proteins, but with relatively low efficiency. This chain is Speckle-type POZ protein-like A (spopla), found in Danio rerio (Zebrafish).